A 240-amino-acid polypeptide reads, in one-letter code: Cysteine-rich venom protein triflin (240 aa).

A signal peptide spans 1-19 (MIAFIVLPILAAVLQQSSG). An SCP domain is found at 39-166 (DLHNSLRRSV…KYSYFYVCQY (128 aa)). Intrachain disulfides connect C75–C153, C92–C167, C148–C164, C186–C193, C189–C198, C202–C235, C211–C229, and C220–C233. In terms of domain architecture, ShKT spans 202 to 235 (CTRENEFTNCDSLVQKSSCQDNYMKSKCPASCFC).

Belongs to the CRISP family. As to quaternary structure, forms a stable, non-covalent complex with SSP-2. As to expression, expressed by the venom gland.

The protein resides in the secreted. Its function is as follows. Blocks contraction of smooth muscle elicited by high potassium-induced depolarization. May target voltage-gated calcium channels (Cav) on smooth muscle. The protein is Cysteine-rich venom protein triflin of Protobothrops flavoviridis (Habu).